A 109-amino-acid polypeptide reads, in one-letter code: Ferredoxin (109 aa).

4Fe-4S ferredoxin-type domains follow at residues 2–30 (TYVVNDECVKCKYTDCVDVCPVDCFYEGE) and 31–60 (FMLVINPDECIDCGVCVPDCPIDAIKPESP). [3Fe-4S] cluster contacts are provided by cysteine 9 and cysteine 17. [4Fe-4S] cluster contacts are provided by cysteine 21, cysteine 40, cysteine 43, and cysteine 46. [3Fe-4S] cluster is bound at residue cysteine 50.

Requires [4Fe-4S] cluster as cofactor. The cofactor is [3Fe-4S] cluster.

Functionally, ferredoxins are iron-sulfur proteins that transfer electrons in a wide variety of metabolic reactions. This is Ferredoxin (fdxA) from Rickettsia felis (strain ATCC VR-1525 / URRWXCal2) (Rickettsia azadi).